The chain runs to 368 residues: tRNA-specific 2-thiouridylase MnmA (368 aa).

ATP-binding positions include 11–18 and methionine 37; that span reads GMSGGVDS. Residues 97 to 99 are interaction with target base in tRNA; that stretch reads NPD. Residue cysteine 102 is the Nucleophile of the active site. Cysteine 102 and cysteine 199 are joined by a disulfide. Glycine 127 lines the ATP pocket. Residues 149 to 151 are interaction with tRNA; the sequence is KDQ. The active-site Cysteine persulfide intermediate is the cysteine 199. The interval 311–312 is interaction with tRNA; that stretch reads RY.

Belongs to the MnmA/TRMU family. Interacts with TusE.

It is found in the cytoplasm. It carries out the reaction S-sulfanyl-L-cysteinyl-[protein] + uridine(34) in tRNA + AH2 + ATP = 2-thiouridine(34) in tRNA + L-cysteinyl-[protein] + A + AMP + diphosphate + H(+). Its function is as follows. Catalyzes the 2-thiolation of uridine at the wobble position (U34) of tRNA(Lys), tRNA(Glu) and tRNA(Gln), leading to the formation of s(2)U34, the first step of tRNA-mnm(5)s(2)U34 synthesis. Sulfur is provided by IscS, via a sulfur-relay system. Binds ATP and its substrate tRNAs. The sequence is that of tRNA-specific 2-thiouridylase MnmA from Salmonella typhimurium (strain LT2 / SGSC1412 / ATCC 700720).